The chain runs to 376 residues: Carbamoyl phosphate synthase small chain (376 aa).

Positions 1–187 are CPSase; that stretch reads MRAFLALEDG…AADGAYAWPG (187 aa). Residues serine 45, glycine 239, and glycine 241 each coordinate L-glutamine. The 186-residue stretch at 191–376 folds into the Glutamine amidotransferase type-1 domain; sequence RLVVYDYGIK…RGMVREAVGR (186 aa). Cysteine 266 serves as the catalytic Nucleophile. Positions 267, 270, 308, 310, and 311 each coordinate L-glutamine. Active-site residues include histidine 349 and glutamate 351.

It belongs to the CarA family. Composed of two chains; the small (or glutamine) chain promotes the hydrolysis of glutamine to ammonia, which is used by the large (or ammonia) chain to synthesize carbamoyl phosphate. Tetramer of heterodimers (alpha,beta)4.

It catalyses the reaction hydrogencarbonate + L-glutamine + 2 ATP + H2O = carbamoyl phosphate + L-glutamate + 2 ADP + phosphate + 2 H(+). The enzyme catalyses L-glutamine + H2O = L-glutamate + NH4(+). It participates in amino-acid biosynthesis; L-arginine biosynthesis; carbamoyl phosphate from bicarbonate: step 1/1. It functions in the pathway pyrimidine metabolism; UMP biosynthesis via de novo pathway; (S)-dihydroorotate from bicarbonate: step 1/3. In terms of biological role, small subunit of the glutamine-dependent carbamoyl phosphate synthetase (CPSase). CPSase catalyzes the formation of carbamoyl phosphate from the ammonia moiety of glutamine, carbonate, and phosphate donated by ATP, constituting the first step of 2 biosynthetic pathways, one leading to arginine and/or urea and the other to pyrimidine nucleotides. The small subunit (glutamine amidotransferase) binds and cleaves glutamine to supply the large subunit with the substrate ammonia. This Nitratidesulfovibrio vulgaris (strain DSM 19637 / Miyazaki F) (Desulfovibrio vulgaris) protein is Carbamoyl phosphate synthase small chain.